The primary structure comprises 348 residues: tRNA N6-adenosine threonylcarbamoyltransferase (348 aa).

His-111 and His-115 together coordinate Fe cation. Residues 134-138 (LVSGG), Asp-167, Gly-180, Asp-184, and Asn-279 contribute to the substrate site. Asp-307 lines the Fe cation pocket.

Belongs to the KAE1 / TsaD family. Fe(2+) serves as cofactor.

It is found in the cytoplasm. The enzyme catalyses L-threonylcarbamoyladenylate + adenosine(37) in tRNA = N(6)-L-threonylcarbamoyladenosine(37) in tRNA + AMP + H(+). Required for the formation of a threonylcarbamoyl group on adenosine at position 37 (t(6)A37) in tRNAs that read codons beginning with adenine. Is involved in the transfer of the threonylcarbamoyl moiety of threonylcarbamoyl-AMP (TC-AMP) to the N6 group of A37, together with TsaE and TsaB. TsaD likely plays a direct catalytic role in this reaction. This Synechocystis sp. (strain ATCC 27184 / PCC 6803 / Kazusa) protein is tRNA N6-adenosine threonylcarbamoyltransferase.